A 189-amino-acid polypeptide reads, in one-letter code: Small ribosomal subunit protein uS5 (189 aa).

In terms of domain architecture, S5 DRBM spans 22–85 (FVDKLVAINR…EAAKRDLIFV (64 aa)).

Belongs to the universal ribosomal protein uS5 family. Part of the 30S ribosomal subunit. Contacts proteins S4 and S8.

With S4 and S12 plays an important role in translational accuracy. Functionally, located at the back of the 30S subunit body where it stabilizes the conformation of the head with respect to the body. In Sinorhizobium medicae (strain WSM419) (Ensifer medicae), this protein is Small ribosomal subunit protein uS5.